The following is a 137-amino-acid chain: Small ribosomal subunit protein uS13 (137 aa).

The disordered stretch occupies residues 114–137 (VTQKNARTRKGPRKTIMAKKDKGK). Over residues 119-130 (ARTRKGPRKTIM) the composition is skewed to basic residues.

The protein belongs to the universal ribosomal protein uS13 family. In terms of assembly, part of the 30S ribosomal subunit. Forms a loose heterodimer with protein S19. Forms two bridges to the 50S subunit in the 70S ribosome.

In terms of biological role, located at the top of the head of the 30S subunit, it contacts several helices of the 16S rRNA. In the 70S ribosome it contacts the 23S rRNA (bridge B1a) and protein L5 of the 50S subunit (bridge B1b), connecting the 2 subunits; these bridges are implicated in subunit movement. Contacts the tRNAs in the A and P-sites. This chain is Small ribosomal subunit protein uS13, found in Mesomycoplasma hyopneumoniae (strain 232) (Mycoplasma hyopneumoniae).